The sequence spans 20 residues: Mu-conotoxin SIIIB (20 aa).

Gln1 carries the pyrrolidone carboxylic acid modification. 3 cysteine pairs are disulfide-bonded: Cys3-Cys13, Cys4-Cys19, and Cys8-Cys20. Cys20 bears the Cysteine amide mark.

In terms of tissue distribution, expressed by the venom duct.

It localises to the secreted. Functionally, mu-conotoxins block voltage-gated sodium channels (VGSC). Potently displaces (125)I-TIIIA from native rat brain Nav1.2/SCN2A (IC(50) is 5 nM) and muscle Nav1.4/SCN4A (IC(50) is 3 nM) VGSCs. Potently and irreversibly inhibits current through Xenopus oocyte-expressed Nav1.2/SCN2A and Nav1.4/SCN4A. The sequence is that of Mu-conotoxin SIIIB from Conus striatus (Striated cone).